We begin with the raw amino-acid sequence, 302 residues long: Sulfate adenylyltransferase subunit 2 (302 aa).

The segment at 280 to 302 (RQGRLIDSDQSASMEQKKRQGYF) is disordered.

This sequence belongs to the PAPS reductase family. CysD subfamily. As to quaternary structure, heterodimer composed of CysD, the smaller subunit, and CysN.

It carries out the reaction sulfate + ATP + H(+) = adenosine 5'-phosphosulfate + diphosphate. It functions in the pathway sulfur metabolism; hydrogen sulfide biosynthesis; sulfite from sulfate: step 1/3. In terms of biological role, with CysN forms the ATP sulfurylase (ATPS) that catalyzes the adenylation of sulfate producing adenosine 5'-phosphosulfate (APS) and diphosphate, the first enzymatic step in sulfur assimilation pathway. APS synthesis involves the formation of a high-energy phosphoric-sulfuric acid anhydride bond driven by GTP hydrolysis by CysN coupled to ATP hydrolysis by CysD. The chain is Sulfate adenylyltransferase subunit 2 from Shewanella baltica (strain OS223).